The sequence spans 422 residues: MGSKYPRSLRCCLPLWAFGLQVTFILLFYFLIGQDPIQADHKFMAIYQVIQDLTLVAALGFGFLSSSFRRHGWSSVAFSFFMLALGVQGTILLDYFLNWVLDWNMIKNPFSPFLSIQRATISTLPLLISAGAVLGKVNLVQLAVMVLVEAMTFGAIRVADKKVFRIEDHIIMMYGHVFGAYFGLTVAWWLSKSLPRRRHENAQTEKVQMTTSSSLFAMLGTLFLWIFWPSINSALLEGTKKKNAVFNTYYALAVSTVTATSMSALSHPKGKINMVHIHNAVLAGGVAVGAPSCLISSPWIAMVLGLTAGLISIWGAKCPQVCLSDLLLNPSGIHYTFGLPGLLGALTYYCLHIIAESRPSNLWIVTQTITDVGALSFAMAMGMVTGLLTGCLLSVKVWRAPHAVKYFDDQAFWEFPHLAVEF.

12 helical membrane-spanning segments follow: residues 13–33 (LPLWAFGLQVTFILLFYFLIG), 43–63 (FMAIYQVIQDLTLVAALGFGF), 76–96 (VAFSFFMLALGVQGTILLDYF), 113–135 (FLSIQRATISTLPLLISAGAVLG), 137–159 (VNLVQLAVMVLVEAMTFGAIRVA), 170–190 (IIMMYGHVFGAYFGLTVAWWL), 215–235 (LFAMLGTLFLWIFWPSINSAL), 244–266 (AVFNTYYALAVSTVTATSMSALS), 272–292 (INMVHIHNAVLAGGVAVGAPS), 294–314 (LISSPWIAMVLGLTAGLISIW), 335–355 (YTFGLPGLLGALTYYCLHIIA), and 372–392 (VGALSFAMAMGMVTGLLTGCL).

This sequence belongs to the ammonium transporter (TC 2.A.49) family. Rh subfamily. In terms of processing, palmitoylated.

Its subcellular location is the cell membrane. Its function is as follows. May be part of an oligomeric complex which is likely to have a transport or channel function in the erythrocyte membrane. The polypeptide is Blood group Rh(D) polypeptide (Rhd) (Rattus norvegicus (Rat)).